The sequence spans 213 residues: ER lumen protein-retaining receptor (213 aa).

Topologically, residues 1-2 are lumenal; the sequence is MN. A helical transmembrane segment spans residues 3-21; the sequence is IFRITADLAHAVAIVILLL. The Cytoplasmic portion of the chain corresponds to 22–35; that stretch reads KIWKSRSCEGISGR. A helical transmembrane segment spans residues 36 to 53; that stretch reads SQILFAVTFFTRYLDLFT. Residues 54–61 lie on the Lumenal side of the membrane; it reads SFYSLYNT. The helical transmembrane segment at 62–80 threads the bilayer; it reads VMKVLFLAGSIGTVYLMWV. The Cytoplasmic portion of the chain corresponds to 81 to 96; it reads KFKATYDRNNDTFRIE. A helical transmembrane segment spans residues 97 to 110; the sequence is FLVIPSIILALIIN. The Lumenal segment spans residues 111–117; the sequence is HEFMFME. The chain crosses the membrane as a helical span at residues 118–137; that stretch reads VMWTFSIYLEAVAIMPQLFM. Residues 138–149 are Cytoplasmic-facing; sequence LSRTGNAETITA. Residues 150-168 form a helical membrane-spanning segment; it reads HYLFALGSYRFLYIFNWVY. Residues 169–178 lie on the Lumenal side of the membrane; it reads RYYTESFFDP. The helical transmembrane segment at 179 to 199 threads the bilayer; sequence IAVVAGIVQTVLYADFFYLYI. The Cytoplasmic segment spans residues 200-213; it reads TRVIQSNRQFEMSA.

It belongs to the ERD2 family.

The protein resides in the endoplasmic reticulum membrane. Its function is as follows. Required for the retention of luminal endoplasmic reticulum proteins. Determines the specificity of the luminal ER protein retention system. Also required for normal vesicular traffic through the Golgi. This is ER lumen protein-retaining receptor (erd-2.1) from Caenorhabditis briggsae.